The following is a 619-amino-acid chain: Dihydroxy-acid dehydratase (619 aa).

Aspartate 81 contacts Mg(2+). Cysteine 122 provides a ligand contact to [2Fe-2S] cluster. Mg(2+) contacts are provided by aspartate 123 and lysine 124. An N6-carboxylysine modification is found at lysine 124. A [2Fe-2S] cluster-binding site is contributed by cysteine 198. A Mg(2+)-binding site is contributed by glutamate 494. Serine 520 (proton acceptor) is an active-site residue.

The protein belongs to the IlvD/Edd family. Homodimer. It depends on [2Fe-2S] cluster as a cofactor. Requires Mg(2+) as cofactor.

The catalysed reaction is (2R)-2,3-dihydroxy-3-methylbutanoate = 3-methyl-2-oxobutanoate + H2O. It carries out the reaction (2R,3R)-2,3-dihydroxy-3-methylpentanoate = (S)-3-methyl-2-oxopentanoate + H2O. Its pathway is amino-acid biosynthesis; L-isoleucine biosynthesis; L-isoleucine from 2-oxobutanoate: step 3/4. It functions in the pathway amino-acid biosynthesis; L-valine biosynthesis; L-valine from pyruvate: step 3/4. Functions in the biosynthesis of branched-chain amino acids. Catalyzes the dehydration of (2R,3R)-2,3-dihydroxy-3-methylpentanoate (2,3-dihydroxy-3-methylvalerate) into 2-oxo-3-methylpentanoate (2-oxo-3-methylvalerate) and of (2R)-2,3-dihydroxy-3-methylbutanoate (2,3-dihydroxyisovalerate) into 2-oxo-3-methylbutanoate (2-oxoisovalerate), the penultimate precursor to L-isoleucine and L-valine, respectively. The polypeptide is Dihydroxy-acid dehydratase (Neisseria meningitidis serogroup C / serotype 2a (strain ATCC 700532 / DSM 15464 / FAM18)).